We begin with the raw amino-acid sequence, 496 residues long: Beta-amylase (496 aa).

Substrate is bound by residues Asp-54, His-94, and Asp-102. Residue Glu-187 is the Proton donor of the active site. Residues Lys-296, His-301, and Thr-343 each coordinate substrate. Glu-381 functions as the Proton acceptor in the catalytic mechanism. Substrate-binding positions include 382–383 (NA) and Arg-421.

The protein belongs to the glycosyl hydrolase 14 family.

The enzyme catalyses Hydrolysis of (1-&gt;4)-alpha-D-glucosidic linkages in polysaccharides so as to remove successive maltose units from the non-reducing ends of the chains.. This chain is Beta-amylase (BMY1), found in Trifolium repens (Creeping white clover).